We begin with the raw amino-acid sequence, 599 residues long: E3 ubiquitin-protein ligase Kcmf1 (599 aa).

The ZZ-type zinc finger occupies 4–60 (HEGVSCDSCLKSNFNGRRYKCLICYDYDLCADCYEDGVTSTRHLVEHPMQCILTRSD). Residues Cys9, Cys12, Cys24, Cys27, Cys33, Cys36, His46, and His50 each contribute to the Zn(2+) site. Residues 78–101 (FTCPYCKKMGFSDATLLEHVSAEH) form a C2H2-type zinc finger. Disordered regions lie at residues 155 to 193 (HGGG…PSGR), 229 to 253 (DRQQ…VSTS), 269 to 294 (GSGG…NLRT), 466 to 486 (VEQQ…VNQM), and 507 to 599 (NTTQ…PDTR). Low complexity-rich tracts occupy residues 160–170 (RRIPGRTLGGP) and 180–192 (SSSS…SPSG). Residues 269-285 (GSGGSGAVGSGSGGGSG) show a composition bias toward gly residues. The segment covering 513 to 532 (GTGGLGGAGATAAPGGGASG) has biased composition (gly residues). Residues 538-547 (TADRGIERRS) are compositionally biased toward basic and acidic residues. Residues 559–593 (SQQPQQQQQSTANPAASQQKYKQNASAATAAGNTN) are compositionally biased toward low complexity.

This sequence belongs to the KCMF1 family. In terms of assembly, interacts with poe.

The enzyme catalyses S-ubiquitinyl-[E2 ubiquitin-conjugating enzyme]-L-cysteine + [acceptor protein]-L-lysine = [E2 ubiquitin-conjugating enzyme]-L-cysteine + N(6)-ubiquitinyl-[acceptor protein]-L-lysine.. In terms of biological role, has intrinsic E3 ubiquitin ligase activity and promotes ubiquitination. Involved in the negative regulation of the Ras/MAPK signaling pathway in the wing by acting with the E2 enzyme Unc6 and the putative E3 ligases poe and Ufd4 to mediate the ubiquitination and proteasomal degradation of rl/MAPK. In Drosophila melanogaster (Fruit fly), this protein is E3 ubiquitin-protein ligase Kcmf1.